The following is a 210-amino-acid chain: Somatotropin (210 aa).

An N-terminal signal peptide occupies residues 1–22 (MGQVFLLMPVLLVSCFLSQGAA). His38 lines the Zn(2+) pocket. A disulfide bond links Cys71 and Cys183. Glu192 contacts Zn(2+). Cysteines 200 and 208 form a disulfide.

It belongs to the somatotropin/prolactin family.

Its subcellular location is the secreted. Functionally, growth hormone plays an important role in growth control and is involved in the regulation of several anabolic processes. Implicated as an osmoregulatory substance important for seawater adaptation. This Oncorhynchus kisutch (Coho salmon) protein is Somatotropin (gh).